Reading from the N-terminus, the 881-residue chain is DNA mismatch repair protein MutS (881 aa).

ATP is bound at residue 632-639 (GPNMGGKS).

This sequence belongs to the DNA mismatch repair MutS family.

Its function is as follows. This protein is involved in the repair of mismatches in DNA. It is possible that it carries out the mismatch recognition step. This protein has a weak ATPase activity. The chain is DNA mismatch repair protein MutS from Acinetobacter baylyi (strain ATCC 33305 / BD413 / ADP1).